The following is a 212-amino-acid chain: Uridine kinase (212 aa).

An ATP-binding site is contributed by 12 to 19 (GGSGGGKT).

It belongs to the uridine kinase family.

It localises to the cytoplasm. It carries out the reaction uridine + ATP = UMP + ADP + H(+). The enzyme catalyses cytidine + ATP = CMP + ADP + H(+). Its pathway is pyrimidine metabolism; CTP biosynthesis via salvage pathway; CTP from cytidine: step 1/3. It participates in pyrimidine metabolism; UMP biosynthesis via salvage pathway; UMP from uridine: step 1/1. This is Uridine kinase from Streptococcus pneumoniae serotype 2 (strain D39 / NCTC 7466).